The chain runs to 249 residues: tRNA pseudouridine synthase A (249 aa).

Residue Asp52 is the Nucleophile of the active site. Tyr111 serves as a coordination point for substrate.

Belongs to the tRNA pseudouridine synthase TruA family. As to quaternary structure, homodimer.

It catalyses the reaction uridine(38/39/40) in tRNA = pseudouridine(38/39/40) in tRNA. Its function is as follows. Formation of pseudouridine at positions 38, 39 and 40 in the anticodon stem and loop of transfer RNAs. The chain is tRNA pseudouridine synthase A from Brachyspira hyodysenteriae (strain ATCC 49526 / WA1).